We begin with the raw amino-acid sequence, 245 residues long: 1-(5-phosphoribosyl)-5-[(5-phosphoribosylamino)methylideneamino] imidazole-4-carboxamide isomerase (245 aa).

Residue aspartate 7 is the Proton acceptor of the active site. Aspartate 129 serves as the catalytic Proton donor.

Belongs to the HisA/HisF family.

The protein resides in the cytoplasm. The enzyme catalyses 1-(5-phospho-beta-D-ribosyl)-5-[(5-phospho-beta-D-ribosylamino)methylideneamino]imidazole-4-carboxamide = 5-[(5-phospho-1-deoxy-D-ribulos-1-ylimino)methylamino]-1-(5-phospho-beta-D-ribosyl)imidazole-4-carboxamide. It functions in the pathway amino-acid biosynthesis; L-histidine biosynthesis; L-histidine from 5-phospho-alpha-D-ribose 1-diphosphate: step 4/9. This is 1-(5-phosphoribosyl)-5-[(5-phosphoribosylamino)methylideneamino] imidazole-4-carboxamide isomerase from Shewanella baltica (strain OS223).